A 124-amino-acid chain; its full sequence is Aspartate 1-decarboxylase (124 aa).

The active-site Schiff-base intermediate with substrate; via pyruvic acid is the Ser25. Ser25 carries the post-translational modification Pyruvic acid (Ser). Position 57 (Thr57) interacts with substrate. Residue Tyr58 is the Proton donor of the active site. Substrate is bound at residue 73-75 (GAA).

It belongs to the PanD family. In terms of assembly, heterooctamer of four alpha and four beta subunits. The cofactor is pyruvate. In terms of processing, is synthesized initially as an inactive proenzyme, which is activated by self-cleavage at a specific serine bond to produce a beta-subunit with a hydroxyl group at its C-terminus and an alpha-subunit with a pyruvoyl group at its N-terminus.

The protein resides in the cytoplasm. The catalysed reaction is L-aspartate + H(+) = beta-alanine + CO2. The protein operates within cofactor biosynthesis; (R)-pantothenate biosynthesis; beta-alanine from L-aspartate: step 1/1. Its function is as follows. Catalyzes the pyruvoyl-dependent decarboxylation of aspartate to produce beta-alanine. The protein is Aspartate 1-decarboxylase of Clostridium botulinum (strain Alaska E43 / Type E3).